We begin with the raw amino-acid sequence, 247 residues long: Ferredoxin:CoB-CoM heterodisulfide reductase subunit C (247 aa).

In terms of domain architecture, 4Fe-4S ferredoxin-type spans Thr-32–Arg-62. 8 residues coordinate [4Fe-4S] cluster: Cys-41, Cys-44, Cys-47, Cys-51, Cys-84, Cys-87, Cys-90, and Cys-94. Positions Arg-216–Thr-240 are enriched in basic and acidic residues. Positions Arg-216–Val-247 are disordered.

Belongs to the HdrC family. As to quaternary structure, the ferredoxin:CoB-CoM heterodisulfide reductase is composed of three subunits; HdrA1, HdrB1 and HdrC1. The cofactor is [4Fe-4S] cluster.

The protein localises to the cytoplasm. It catalyses the reaction coenzyme B + coenzyme M + 2 oxidized [2Fe-2S]-[ferredoxin] = coenzyme M-coenzyme B heterodisulfide + 2 reduced [2Fe-2S]-[ferredoxin] + 2 H(+). Its pathway is cofactor metabolism; coenzyme M-coenzyme B heterodisulfide reduction; coenzyme B and coenzyme M from coenzyme M-coenzyme B heterodisulfide: step 1/1. Its function is as follows. Part of a complex that catalyzes the reversible reduction of CoM-S-S-CoB to the thiol-coenzymes H-S-CoM (coenzyme M) and H-S-CoB (coenzyme B). Probably involved in methylotrophic methanogenesis but not in aceticlastic methanogenesis. This Methanosarcina acetivorans (strain ATCC 35395 / DSM 2834 / JCM 12185 / C2A) protein is Ferredoxin:CoB-CoM heterodisulfide reductase subunit C.